The chain runs to 509 residues: Surface lipoprotein assembly modifier (509 aa).

The first 32 residues, 1–32, serve as a signal peptide directing secretion; sequence MNLMINLKPLTFLPFFGRLVFLSGVIYNTAWA. The segment at 33–204 is N-terminal domain; that stretch reads NTVIPVDNSR…SYIDTINQRD (172 aa). The interval 43–72 is disordered; the sequence is PDETFSQTSPKQHLFSQKPKPTEPTSSASS. Residues 46-57 are compositionally biased toward polar residues; that stretch reads TFSQTSPKQHLF. Residues 120 to 153 form a TPR repeat; it reads FLLKWAQAVVARKQGKLNESVRLYRQIIAEKPNL. Positions 205 to 509 are C-terminal probable beta barrel; that stretch reads SWNVYGGVNY…RIYLTFSKTF (305 aa). Transmembrane regions (beta stranded) follow at residues 206–216, 245–256, 261–270, 284–294, 298–308, 331–341, 345–355, 371–381, 386–395, 408–417, 423–432, 461–470, 476–485, and 499–509; these read WNVYGGVNYLH, LSYFINLSKNWS, FFTEFSADIN, STRLNLGGGYR, TEVKLMPFVEQ, SGINLDVDYWL, WKISTVLEYTE, YSISNTLIYMP, FWFVGLDYYQ, QGIRLGWGQE, STRLQTSYAT, GVNFTIWHRS, ITPKITWAYQ, and NRIYLTFSKTF.

The protein belongs to the Slam family.

The protein localises to the cell outer membrane. Functionally, required for correct export to the cell surface of some cell outer membrane lipoproteins (tested with PM1514) upon heterologous expression in E.coli and probably also in Pasteurella. The chain is Surface lipoprotein assembly modifier from Pasteurella multocida (strain Pm70).